A 311-amino-acid polypeptide reads, in one-letter code: Putative protease MJ0651 (311 aa).

Ser-128 acts as the Nucleophile in catalysis. Catalysis depends on Lys-180, which acts as the Proton donor/acceptor.

It belongs to the peptidase S49 family.

The polypeptide is Putative protease MJ0651 (Methanocaldococcus jannaschii (strain ATCC 43067 / DSM 2661 / JAL-1 / JCM 10045 / NBRC 100440) (Methanococcus jannaschii)).